Reading from the N-terminus, the 20-residue chain is Cytochrome P450-RR1 (20 aa).

This sequence belongs to the cytochrome P450 family. Heme is required as a cofactor.

Functionally, P450-RRI catalyzes the O-dealkylation of 2-ethoxyphenol and 2-methoxyphenol to produce catechol. The cytochrome binds other ortho-substituted phenols, including 2-ethoxyphenol, 2-methylphenol and 2-chlorophenol. This chain is Cytochrome P450-RR1, found in Rhodococcus rhodochrous.